Reading from the N-terminus, the 321-residue chain is Aspartate carbamoyltransferase catalytic subunit (321 aa).

Carbamoyl phosphate is bound by residues Arg65 and Thr66. Residue Lys93 coordinates L-aspartate. Carbamoyl phosphate is bound by residues Arg115, His143, and Gln146. Residues Arg176 and Arg230 each coordinate L-aspartate. Residues Gly271 and Pro272 each coordinate carbamoyl phosphate.

It belongs to the aspartate/ornithine carbamoyltransferase superfamily. ATCase family. Heterododecamer (2C3:3R2) of six catalytic PyrB chains organized as two trimers (C3), and six regulatory PyrI chains organized as three dimers (R2).

The catalysed reaction is carbamoyl phosphate + L-aspartate = N-carbamoyl-L-aspartate + phosphate + H(+). It functions in the pathway pyrimidine metabolism; UMP biosynthesis via de novo pathway; (S)-dihydroorotate from bicarbonate: step 2/3. In terms of biological role, catalyzes the condensation of carbamoyl phosphate and aspartate to form carbamoyl aspartate and inorganic phosphate, the committed step in the de novo pyrimidine nucleotide biosynthesis pathway. This is Aspartate carbamoyltransferase catalytic subunit from Bartonella henselae (strain ATCC 49882 / DSM 28221 / CCUG 30454 / Houston 1) (Rochalimaea henselae).